Here is a 373-residue protein sequence, read N- to C-terminus: MLIIIRPSGEIALKSPRSRRNFEHTLANNIRSVIKEGKIWRSQGVLFLEVNDDNKNIEELSKVFGIASFSPVMSIKSYNNNLEDIINKAKEVFAEIVKGKIFSVRAKRIGSHNFTSLDVQRKVGEALYPFSRGVNLENPEVEVFIEIRNDVAYFYHKIIKGPKGLPVGVAGKTVVLFSGGIDSPVATWMMMKRGSIPVILNFNLGGSVHRKFVLEELSVLRKWSGGHKLKLFIVNGTDVLIKLSQIEKRNRVVMLKRVMYKVAERLCDKANVKSITTGESLSQVSSQTMTNLYVTEYGIKYPIFRPLIGFDKEEIVELARKIGTYEYSIKLPEYCAISTKARTSVELDEVLKDEENLNIDYEKVLENSEVIEI.

The THUMP domain maps to 54 to 158 (NKNIEELSKV…NDVAYFYHKI (105 aa)). Residues 176–177 (LF), 201–202 (NF), K256, G278, and Q287 contribute to the ATP site.

This sequence belongs to the ThiI family.

The protein localises to the cytoplasm. The enzyme catalyses [ThiI sulfur-carrier protein]-S-sulfanyl-L-cysteine + a uridine in tRNA + 2 reduced [2Fe-2S]-[ferredoxin] + ATP + H(+) = [ThiI sulfur-carrier protein]-L-cysteine + a 4-thiouridine in tRNA + 2 oxidized [2Fe-2S]-[ferredoxin] + AMP + diphosphate. It carries out the reaction [ThiS sulfur-carrier protein]-C-terminal Gly-Gly-AMP + S-sulfanyl-L-cysteinyl-[cysteine desulfurase] + AH2 = [ThiS sulfur-carrier protein]-C-terminal-Gly-aminoethanethioate + L-cysteinyl-[cysteine desulfurase] + A + AMP + 2 H(+). The protein operates within cofactor biosynthesis; thiamine diphosphate biosynthesis. In terms of biological role, catalyzes the ATP-dependent transfer of a sulfur to tRNA to produce 4-thiouridine in position 8 of tRNAs, which functions as a near-UV photosensor. Also catalyzes the transfer of sulfur to the sulfur carrier protein ThiS, forming ThiS-thiocarboxylate. This is a step in the synthesis of thiazole, in the thiamine biosynthesis pathway. The sulfur is donated as persulfide by IscS. The protein is Probable tRNA sulfurtransferase of Saccharolobus islandicus (strain M.16.27) (Sulfolobus islandicus).